The following is a 391-amino-acid chain: Superoxide dismutase [Fe] 1, chloroplastic (391 aa).

A chloroplast-targeting transit peptide spans 1 to 73 (MAFATLVGVG…GESTNSRVLQ (73 aa)). A compositionally biased stretch (acidic residues) spans 87–119 (VNDGIDDETASDAEMDEDAEANGDESSGTDEDA). The tract at residues 87-120 (VNDGIDDETASDAEMDEDAEANGDESSGTDEDAS) is disordered. Fe cation is bound by residues histidine 148, histidine 202, aspartate 301, and histidine 305. Positions 370–391 (MPQQVNGDAREQTSGQEKSLGV) are disordered. Residues 381–391 (QTSGQEKSLGV) show a composition bias toward polar residues.

This sequence belongs to the iron/manganese superoxide dismutase family. Homodimer. Fe cation serves as cofactor.

It is found in the plastid. The protein resides in the chloroplast. It carries out the reaction 2 superoxide + 2 H(+) = H2O2 + O2. Its function is as follows. Destroys superoxide anion radicals which are normally produced within the cells and which are toxic to biological systems. The sequence is that of Superoxide dismutase [Fe] 1, chloroplastic from Oryza sativa subsp. japonica (Rice).